The sequence spans 104 residues: Urease subunit beta (104 aa).

It belongs to the urease beta subunit family. In terms of assembly, heterotrimer of UreA (gamma), UreB (beta) and UreC (alpha) subunits. Three heterotrimers associate to form the active enzyme.

Its subcellular location is the cytoplasm. The catalysed reaction is urea + 2 H2O + H(+) = hydrogencarbonate + 2 NH4(+). It functions in the pathway nitrogen metabolism; urea degradation; CO(2) and NH(3) from urea (urease route): step 1/1. The chain is Urease subunit beta from Synechococcus sp. (strain RCC307).